The primary structure comprises 282 residues: Shikimate dehydrogenase (NADP(+)) (282 aa).

Shikimate-binding positions include 19-21 and Thr-66; that span reads TQS. The Proton acceptor role is filled by Lys-70. Residues Asn-91 and Asp-107 each contribute to the shikimate site. Residues 132–136, 155–160, Ile-224, and Gly-246 each bind NADP(+); these read GAGGA and NRTITR.

This sequence belongs to the shikimate dehydrogenase family. Homodimer.

It carries out the reaction shikimate + NADP(+) = 3-dehydroshikimate + NADPH + H(+). It participates in metabolic intermediate biosynthesis; chorismate biosynthesis; chorismate from D-erythrose 4-phosphate and phosphoenolpyruvate: step 4/7. Its function is as follows. Involved in the biosynthesis of the chorismate, which leads to the biosynthesis of aromatic amino acids. Catalyzes the reversible NADPH linked reduction of 3-dehydroshikimate (DHSA) to yield shikimate (SA). In Buchnera aphidicola subsp. Baizongia pistaciae (strain Bp), this protein is Shikimate dehydrogenase (NADP(+)).